Consider the following 158-residue polypeptide: Pathogenesis-related protein 2 (158 aa).

Belongs to the BetVI family.

This is Pathogenesis-related protein 2 (PR2) from Petroselinum crispum (Parsley).